Consider the following 701-residue polypeptide: Acetyl-coenzyme A synthetase, cytoplasmic (701 aa).

Positions 1–41 (MGLPEERVRSGSGSRGQEEAGAGGRARSWSPPPEVSRSAHV) are disordered. Positions 1 to 107 (MGLPEERVRS…GATTNICYNV (107 aa)) are interaction with TFEB. 3 positions are modified to phosphoserine: Ser28, Ser30, and Ser36. CoA is bound at residue 219–222 (RGEK). Residues Ser263, Ser265, and Ser267 each carry the phosphoserine modification. Residue Thr363 coordinates CoA. Lys418 carries the post-translational modification N6-acetyllysine. ATP contacts are provided by residues 439-441 (GEP), 463-468 (DTFWQT), Asp552, and Arg567. The CoA site is built by Ser575 and Arg636. The Nuclear localization signal signature appears at 656–668 (KTRSGKIMRRVLR). Ser659 bears the Phosphoserine; by AMPK mark. Lys661 is subject to N6-acetyllysine.

The protein belongs to the ATP-dependent AMP-binding enzyme family. As to quaternary structure, monomer. Interacts with TFEB. AMPK-mediated phosphorylated form at Ser-659 interacts with KPNA1; this interaction results in nuclear translocation of ACSS2. Interacts with the 'Thr-172' phosphorylated form of PRKAA2. Interacts with CREBBP. In terms of processing, reversibly acetylated at Lys-661. The acetyl-CoA synthase activity is inhibited by acetylation and activated by deacetylation mediated by the deacetylases SIRT1 and SIRT3. Glucose deprivation results in its AMPK-dependent phosphorylation at Ser-659, which leads to exposure of its nuclear localization signal, required for its interaction with KPNA1 and subsequent translocation to the nucleus.

It localises to the cytoplasm. The protein localises to the cytosol. The protein resides in the nucleus. It catalyses the reaction acetate + ATP + CoA = acetyl-CoA + AMP + diphosphate. It carries out the reaction propanoate + ATP + CoA = propanoyl-CoA + AMP + diphosphate. Inhibited by acetylation at Lys-661 and activated by deacetylation mediated by the deacetylases SIRT1 and SIRT3. Its function is as follows. Catalyzes the synthesis of acetyl-CoA from short-chain fatty acids. Acetate is the preferred substrate. Can also utilize propionate with a much lower affinity. Nuclear ACSS2 promotes glucose deprivation-induced lysosomal biogenesis and autophagy, tumor cell survival and brain tumorigenesis. Glucose deprivation results in AMPK-mediated phosphorylation of ACSS2 leading to its translocation to the nucleus where it binds to TFEB and locally produces acetyl-CoA for histone acetylation in the promoter regions of TFEB target genes thereby activating their transcription. The regulation of genes associated with autophagy and lysosomal activity through ACSS2 is important for brain tumorigenesis and tumor survival. Acts as a chromatin-bound transcriptional coactivator that up-regulates histone acetylation and expression of neuronal genes. Can be recruited to the loci of memory-related neuronal genes to maintain a local acetyl-CoA pool, providing the substrate for histone acetylation and promoting the expression of specific genes, which is essential for maintaining long-term spatial memory. The chain is Acetyl-coenzyme A synthetase, cytoplasmic (ACSS2) from Homo sapiens (Human).